The chain runs to 607 residues: Dolichyl-diphosphooligosaccharide--protein glycosyltransferase subunit 1 (607 aa).

An N-terminal signal peptide occupies residues 1–23 (MEAPAAGLFLLLLLGTWAPAPGS). The Lumenal segment spans residues 24–438 (ASSEAPPLIN…TFNKVLMLQE (415 aa)). Lysine 187 carries the N6-acetyllysine modification. Residue asparagine 299 is glycosylated (N-linked (GlcNAc...) asparagine). Residues 439–457 (PLLVVAAFYILFFTVIIYV) traverse the membrane as a helical segment. Over 458–607 (RLDFSITKDP…TKIDHILDAL (150 aa)) the chain is Cytoplasmic. Lysine 538 bears the N6-acetyllysine; alternate mark. Lysine 538 is covalently cross-linked (Glycyl lysine isopeptide (Lys-Gly) (interchain with G-Cter in SUMO2); alternate).

The protein belongs to the OST1 family. As to quaternary structure, component of the oligosaccharyltransferase (OST) complex. OST exists in two different complex forms which contain common core subunits RPN1, RPN2, OST48, OST4, DAD1 and TMEM258, either STT3A or STT3B as catalytic subunits, and form-specific accessory subunits. STT3A complex assembly occurs through the formation of 3 subcomplexes. Subcomplex 1 contains RPN1 and TMEM258, subcomplex 2 contains the STT3A-specific subunits STT3A, DC2/OSTC, and KCP2 as well as the core subunit OST4, and subcomplex 3 contains RPN2, DAD1, and OST48. The STT3A complex can form stable complexes with the Sec61 complex or with both the Sec61 and TRAP complexes. Interacts with TMEM35A/NACHO. Ubiquitinated by the ECS(ASB11) complex. Ubiquitinated by RNF128, leading to degradation in a proteasome/lysosome-dependent manner. Post-translationally, ufmylated by UFL1 in response to endoplasmic reticulum stress, promoting reticulophagy of endoplasmic reticulum sheets. As to expression, expressed in all tissues tested.

The protein localises to the endoplasmic reticulum membrane. The protein resides in the melanosome. The protein operates within protein modification; protein glycosylation. Functionally, subunit of the oligosaccharyl transferase (OST) complex that catalyzes the initial transfer of a defined glycan (Glc(3)Man(9)GlcNAc(2) in eukaryotes) from the lipid carrier dolichol-pyrophosphate to an asparagine residue within an Asn-X-Ser/Thr consensus motif in nascent polypeptide chains, the first step in protein N-glycosylation. N-glycosylation occurs cotranslationally and the complex associates with the Sec61 complex at the channel-forming translocon complex that mediates protein translocation across the endoplasmic reticulum (ER). All subunits are required for a maximal enzyme activity. The protein is Dolichyl-diphosphooligosaccharide--protein glycosyltransferase subunit 1 of Homo sapiens (Human).